The sequence spans 130 residues: Putative ankyrin repeat protein R886 (130 aa).

3 ANK repeats span residues 21–50, 54–83, and 85–113; these read NYDR…DITA, YGFT…SIIK, and DNLT…DIRY.

The polypeptide is Putative ankyrin repeat protein R886 (Acanthamoeba polyphaga (Amoeba)).